The chain runs to 352 residues: Uroporphyrinogen decarboxylase (352 aa).

Substrate-binding positions include 27–31, aspartate 77, tyrosine 154, threonine 209, and histidine 325; that span reads RQAGR.

This sequence belongs to the uroporphyrinogen decarboxylase family. Homodimer.

It localises to the cytoplasm. It catalyses the reaction uroporphyrinogen III + 4 H(+) = coproporphyrinogen III + 4 CO2. It participates in porphyrin-containing compound metabolism; protoporphyrin-IX biosynthesis; coproporphyrinogen-III from 5-aminolevulinate: step 4/4. Catalyzes the decarboxylation of four acetate groups of uroporphyrinogen-III to yield coproporphyrinogen-III. This is Uroporphyrinogen decarboxylase from Legionella pneumophila (strain Lens).